The sequence spans 536 residues: MFNRIRISTSLFLLLISFCIMQLISTGLSYVALRADNHNLERITVSSQQRDALSLSWVSLLQARNTLNRAGTRAALKVPQEQVDALMGGARSSLQKADLYFNQFLDTPRADEQEQQLADATRDSYENLRGALRELIVFLENRNLQAFMDQPTQKIQDRFEADFVQYLQLAKATTDEASASSQQAYGWSIWLVAGAVLMLLVVTLSAMWWLRTMLVQPLNIIRGHFERIASGDLSAPIEVYGRNEISQLFASLQRMQQSLIGTVGAVRDGAESILIGLQEIAEGNNDLSSRTEQQAASLEETAASMEQLTATVKQNADNARQASQLARDASSTAAKGGELADDVVTTMHDIANSSQKIGAITSVIDGIAFQTNILALNAAVEAARAGEQGRGFAVVAGEVRNLASRSAQAAKEIKLLIDESVSRVKHGSVLVENSGATMQDIVRSVTRVTDIMGEIASASDEQSRGIEQVTQAVTQMDQVTQQNAALVVESASAAAALEEQAITLADAVAVFRLADDNFVAPETSSTVKETLDCQTA.

At Met1–Ser10 the chain is on the cytoplasmic side. The chain crosses the membrane as a helical span at residues Leu11–Val31. Residues Ala32–Ser188 lie on the Periplasmic side of the membrane. The interval Arg64–Arg73 is the 3 Arg may form a positively charged pocket, which binds the alpha-carboxyl group of the attractant AA. Residues Ile189–Trp209 traverse the membrane as a helical segment. Topologically, residues Leu210 to Ala536 are cytoplasmic. One can recognise an HAMP domain in the interval Thr212–Gly264. In terms of domain architecture, Methyl-accepting transducer spans Gly269–Glu498. At Gln293 the chain carries Glutamate methyl ester (Gln). Glu300 carries the post-translational modification Glutamate methyl ester (Glu). Gln307 carries the glutamate methyl ester (Gln) modification. Residues Glu489 and Glu498 each carry the glutamate methyl ester (Glu) modification.

Belongs to the methyl-accepting chemotaxis (MCP) protein family.

It is found in the cell inner membrane. In terms of biological role, this protein responds to changes in Asp concentration in the environment, transduces a signal from the outside to the inside of the cell, and facilitates sensory adaptation through various levels of methylation. Chemotactic-signal transducers respond to changes in the concentration of attractants and repellents in the environment, transduce a signal from the outside to the inside of the cell, and facilitate sensory adaptation through the variation of the level of methylation. Attractants increase the level of methylation while repellents decrease the level of methylation, the methyl groups are added by the methyltransferase CheR and removed by the methylesterase CheB. The polypeptide is Methyl-accepting chemotaxis aspartate transducer (tas) (Klebsiella aerogenes (strain ATCC 13048 / DSM 30053 / CCUG 1429 / JCM 1235 / KCTC 2190 / NBRC 13534 / NCIMB 10102 / NCTC 10006 / CDC 819-56) (Enterobacter aerogenes)).